A 347-amino-acid polypeptide reads, in one-letter code: Probable E3 ubiquitin-protein ligase DTX3 (347 aa).

The disordered stretch occupies residues 111–157 (GGEHPELHRPGPPPLRAAPLLPPGARGLPPPPPPLPPPLPPRLREDA). Residues 120–151 (PGPPPLRAAPLLPPGARGLPPPPPPLPPPLPP) show a composition bias toward pro residues. The segment at 164–205 (CPICLGEIQNAKTLEKCRHSFCEGCITRALQVKKACPMCGRF) adopts an RING-type zinc-finger fold.

The protein belongs to the Deltex family. In terms of assembly, homodimer. May form a heterodimer with other members of the Deltex family. Interacts with NOTCH1. In terms of tissue distribution, strongly expressed in testis and brain. Weakly expressed in kidney.

The protein localises to the cytoplasm. It carries out the reaction S-ubiquitinyl-[E2 ubiquitin-conjugating enzyme]-L-cysteine + [acceptor protein]-L-lysine = [E2 ubiquitin-conjugating enzyme]-L-cysteine + N(6)-ubiquitinyl-[acceptor protein]-L-lysine.. Its pathway is protein modification; protein ubiquitination. In terms of biological role, regulator of Notch signaling, a signaling pathway involved in cell-cell communications that regulates a broad spectrum of cell-fate determinations. Probably acts both as a positive and negative regulator of Notch, depending on the developmental and cell context. Functions as a ubiquitin ligase protein in vitro, suggesting that it may regulate the Notch pathway via some ubiquitin ligase activity. The protein is Probable E3 ubiquitin-protein ligase DTX3 (Dtx3) of Mus musculus (Mouse).